Here is a 163-residue protein sequence, read N- to C-terminus: Transcription elongation factor GreA (163 aa).

The stretch at 45–65 (NAEYHAAREKQAFIEARINEL) forms a coiled coil.

It belongs to the GreA/GreB family.

Necessary for efficient RNA polymerase transcription elongation past template-encoded arresting sites. The arresting sites in DNA have the property of trapping a certain fraction of elongating RNA polymerases that pass through, resulting in locked ternary complexes. Cleavage of the nascent transcript by cleavage factors such as GreA or GreB allows the resumption of elongation from the new 3'terminus. GreA releases sequences of 2 to 3 nucleotides. In Helicobacter hepaticus (strain ATCC 51449 / 3B1), this protein is Transcription elongation factor GreA.